The primary structure comprises 320 residues: Ferrochelatase (320 aa).

Fe cation is bound by residues His-194 and Glu-275.

This sequence belongs to the ferrochelatase family.

It localises to the cytoplasm. The catalysed reaction is heme b + 2 H(+) = protoporphyrin IX + Fe(2+). The protein operates within porphyrin-containing compound metabolism; protoheme biosynthesis; protoheme from protoporphyrin-IX: step 1/1. Functionally, catalyzes the ferrous insertion into protoporphyrin IX. This Xylella fastidiosa (strain M23) protein is Ferrochelatase.